The sequence spans 158 residues: Crossover junction endodeoxyribonuclease RuvC (158 aa).

Residues Asp7, Glu66, and Asp139 contribute to the active site. Positions 7, 66, and 139 each coordinate Mg(2+).

This sequence belongs to the RuvC family. In terms of assembly, homodimer which binds Holliday junction (HJ) DNA. The HJ becomes 2-fold symmetrical on binding to RuvC with unstacked arms; it has a different conformation from HJ DNA in complex with RuvA. In the full resolvosome a probable DNA-RuvA(4)-RuvB(12)-RuvC(2) complex forms which resolves the HJ. Requires Mg(2+) as cofactor.

It is found in the cytoplasm. It carries out the reaction Endonucleolytic cleavage at a junction such as a reciprocal single-stranded crossover between two homologous DNA duplexes (Holliday junction).. The RuvA-RuvB-RuvC complex processes Holliday junction (HJ) DNA during genetic recombination and DNA repair. Endonuclease that resolves HJ intermediates. Cleaves cruciform DNA by making single-stranded nicks across the HJ at symmetrical positions within the homologous arms, yielding a 5'-phosphate and a 3'-hydroxyl group; requires a central core of homology in the junction. The consensus cleavage sequence is 5'-(A/T)TT(C/G)-3'. Cleavage occurs on the 3'-side of the TT dinucleotide at the point of strand exchange. HJ branch migration catalyzed by RuvA-RuvB allows RuvC to scan DNA until it finds its consensus sequence, where it cleaves and resolves the cruciform DNA. In Campylobacter jejuni subsp. jejuni serotype O:6 (strain 81116 / NCTC 11828), this protein is Crossover junction endodeoxyribonuclease RuvC.